The sequence spans 160 residues: 6,7-dimethyl-8-ribityllumazine synthase (160 aa).

Residues Trp-31, 65–67 (SFE), and 89–91 (CVV) contribute to the 5-amino-6-(D-ribitylamino)uracil site. 94 to 95 (DT) contacts (2S)-2-hydroxy-3-oxobutyl phosphate. The active-site Proton donor is the His-97. Phe-122 provides a ligand contact to 5-amino-6-(D-ribitylamino)uracil. A (2S)-2-hydroxy-3-oxobutyl phosphate-binding site is contributed by Arg-136.

This sequence belongs to the DMRL synthase family.

It catalyses the reaction (2S)-2-hydroxy-3-oxobutyl phosphate + 5-amino-6-(D-ribitylamino)uracil = 6,7-dimethyl-8-(1-D-ribityl)lumazine + phosphate + 2 H2O + H(+). Its pathway is cofactor biosynthesis; riboflavin biosynthesis; riboflavin from 2-hydroxy-3-oxobutyl phosphate and 5-amino-6-(D-ribitylamino)uracil: step 1/2. Functionally, catalyzes the formation of 6,7-dimethyl-8-ribityllumazine by condensation of 5-amino-6-(D-ribitylamino)uracil with 3,4-dihydroxy-2-butanone 4-phosphate. This is the penultimate step in the biosynthesis of riboflavin. In Parabacteroides distasonis (strain ATCC 8503 / DSM 20701 / CIP 104284 / JCM 5825 / NCTC 11152), this protein is 6,7-dimethyl-8-ribityllumazine synthase.